Reading from the N-terminus, the 72-residue chain is LITAF domain-containing protein (72 aa).

In terms of domain architecture, LITAF spans 1-71; that stretch reads MPVQAVCPYC…CQRELFYYHR (71 aa). Residues Cys7 and Cys10 each coordinate Zn(2+). The tract at residues 22-45 is membrane-binding amphipathic helix; it reads PGALTWLLCTTLFLFGYVLGCCFL. The Zn(2+) site is built by Cys59 and Cys62.

Belongs to the CDIP1/LITAF family.

It localises to the membrane. This is LITAF domain-containing protein from Homo sapiens (Human).